Here is a 682-residue protein sequence, read N- to C-terminus: Elongation factor G (682 aa).

The region spanning 8–282 is the tr-type G domain; it reads QKFRNFGIMA…AVVDYLPSPV (275 aa). Residues 17–24, 81–85, and 135–138 contribute to the GTP site; these read AHIDAGKT, DTPGH, and NKMD.

Belongs to the TRAFAC class translation factor GTPase superfamily. Classic translation factor GTPase family. EF-G/EF-2 subfamily.

It is found in the cytoplasm. Catalyzes the GTP-dependent ribosomal translocation step during translation elongation. During this step, the ribosome changes from the pre-translocational (PRE) to the post-translocational (POST) state as the newly formed A-site-bound peptidyl-tRNA and P-site-bound deacylated tRNA move to the P and E sites, respectively. Catalyzes the coordinated movement of the two tRNA molecules, the mRNA and conformational changes in the ribosome. This is Elongation factor G from Malacoplasma penetrans (strain HF-2) (Mycoplasma penetrans).